Consider the following 608-residue polypeptide: Probable Ufm1-specific protease 2 (608 aa).

Active-site residues include Cys441, Asp565, and His567.

Belongs to the peptidase C78 family.

Its function is as follows. Thiol protease which recognizes and hydrolyzes the peptide bond at the C-terminal Gly of UFM1, a ubiquitin-like modifier protein bound to a number of target proteins. Does not hydrolyze SUMO1 or ISG15 ubiquitin-like proteins. This is Probable Ufm1-specific protease 2 from Drosophila pseudoobscura pseudoobscura (Fruit fly).